The primary structure comprises 669 residues: Methionine--tRNA ligase (669 aa).

Residues 14 to 24 carry the 'HIGH' region motif; that stretch reads YYPSGKLHIGN. His-161 lines the Zn(2+) pocket. The 'KMSKS' region signature appears at 309 to 313; it reads KMSKS. ATP is bound at residue Lys-312. Positions 566 to 669 constitute a tRNA-binding domain; sequence DFDKVELKVA…KEMPNGAGIA (104 aa).

The protein belongs to the class-I aminoacyl-tRNA synthetase family. MetG type 2B subfamily. As to quaternary structure, homodimer.

It localises to the cytoplasm. It catalyses the reaction tRNA(Met) + L-methionine + ATP = L-methionyl-tRNA(Met) + AMP + diphosphate. Functionally, is required not only for elongation of protein synthesis but also for the initiation of all mRNA translation through initiator tRNA(fMet) aminoacylation. In Enterococcus faecalis (strain ATCC 700802 / V583), this protein is Methionine--tRNA ligase.